We begin with the raw amino-acid sequence, 481 residues long: 3-ketoacyl-CoA synthase 8 (481 aa).

The next 2 membrane-spanning stretches (helical) occupy residues 4–24 and 44–64; these read LKMV…AMKG and LQTI…YMLT. Residues 61–358 form the FAE domain; that stretch reads YMLTRPKPVY…FFITFVKKKY (298 aa). Catalysis depends on residues Cys213, His292, His376, His380, His409, and Asn413.

The protein belongs to the thiolase-like superfamily. Chalcone/stilbene synthases family. Expressed in leaves and seedlings.

The protein resides in the endoplasmic reticulum membrane. The enzyme catalyses a very-long-chain acyl-CoA + malonyl-CoA + H(+) = a very-long-chain 3-oxoacyl-CoA + CO2 + CoA. It participates in lipid metabolism; fatty acid biosynthesis. This is 3-ketoacyl-CoA synthase 8 from Arabidopsis thaliana (Mouse-ear cress).